The chain runs to 1616 residues: DNA (cytosine-5)-methyltransferase 1 (1616 aa).

The segment at 1 to 120 (MPARTAPARV…NQARSEARRV (120 aa)) is interaction with DMAP1. The segment at 1 to 148 (MPARTAPARV…RRSKSDGEAK (148 aa)) is interaction with DNMT3A. Interaction with the PRC2/EED-EZH2 complex stretches follow at residues 1–336 (MPAR…TEKK) and 308–606 (NPQI…TIRH). Positions 16 to 109 (PAISLPDDVR…NREVNGRLEN (94 aa)) constitute a DMAP1-binding domain. Residue K70 is modified to N6,N6-dimethyllysine. The tract at residues 103 to 349 (VNGRLENGNQ…AKTVMNSKTH (247 aa)) is disordered. Phosphoserine is present on residues S127 and S133. T137 is subject to Phosphothreonine. A Phosphoserine modification is found at S141. Residue K142 is modified to N6-methyllysine; by SETD7. S143 bears the Phosphoserine; by PKB/AKT1 mark. An interaction with DNMT3B region spans residues 149–217 (PEPSPSPRIT…TSRERVARPL (69 aa)). Residues S152 and S154 each carry the phosphoserine modification. K160 carries the N6-acetyllysine modification. Residues 163–174 (RQTTITSHFAKG) are interaction with PCNA. A Phosphothreonine modification is found at T166. N6-acetyllysine occurs at positions 173 and 188. The Nuclear localization signal signature appears at 177-205 (KRKPQEESERAKSDESIKEEDKDQDEKRR). Basic and acidic residues-rich tracts occupy residues 179 to 214 (KPQE…ERVA), 221 to 267 (EPER…REAR), and 281 to 306 (KDEK…EPEK). An N6-acetyllysine; alternate modification is found at K259. K259 participates in a covalent cross-link: Glycyl lysine isopeptide (Lys-Gly) (interchain with G-Cter in SUMO2); alternate. Positions 310–502 (QISDEKDEDE…PEYAPIFGLM (193 aa)) are homodimerization. Residue S312 is modified to Phosphoserine. A compositionally biased stretch (basic and acidic residues) spans 321 to 337 (EEKRRKTTPKEPTEKKM). Positions 331 to 550 (EPTEKKMARA…NLNRFTEDSL (220 aa)) are DNA replication foci-targeting sequence. 2 residues coordinate Zn(2+): C353 and C356. K366 carries the N6-acetyllysine modification. S394 and S398 each carry phosphoserine. 2 residues coordinate Zn(2+): C414 and H418. Phosphoserine is present on residues S509 and S549. Residues 646-692 (NAFKRRRCGVCEVCQQPECGKCKACKDMVKFGGSGRSKQACQERRCP) form a CXXC-type zinc finger. The interval 651–697 (RRCGVCEVCQQPECGKCKACKDMVKFGGSGRSKQACQERRCPNMAMK) is required for activity. Residues C653, C656, C659, C664, C667, C670, C686, and C691 each contribute to the Zn(2+) site. The tract at residues 693-754 (NMAMKEADDD…SYYKKVCIDA (62 aa)) is autoinhibitory linker. The segment covering 699–709 (ADDDEEVDDNI) has biased composition (acidic residues). Residues 699-729 (ADDDEEVDDNIPEMPSPKKMHQGKKKKQNKN) form a disordered region. S714 bears the Phosphoserine mark. Over residues 716-728 (KKMHQGKKKKQNK) the composition is skewed to basic residues. A Phosphoserine modification is found at S732. N6-acetyllysine is present on K749. A BAH 1 domain is found at 755 to 880 (ETLEVGDCVS…QDYARFESPP (126 aa)). S878 is subject to Phosphoserine. Residues K891, K957, K961, K975, and K1054 each carry the N6-acetyllysine modification. One can recognise a BAH 2 domain in the interval 972–1100 (HYRKYSDYIK…AKSKSFEDPP (129 aa)). Positions 1095-1130 (SFEDPPNHARSPGNKGKGKGKGKGKPKSQACEPSEP) are disordered. 5 repeat units span residues 1109–1110 (KG), 1111–1112 (KG), 1113–1114 (KG), 1115–1116 (KG), and 1117–1118 (KG). Positions 1109–1120 (KGKGKGKGKGKP) are 6 X 2 AA tandem repeats of K-G. Residues 1110–1120 (GKGKGKGKGKP) show a composition bias toward basic residues. An N6-acetyllysine mark is found at K1111, K1113, and K1115. N6-acetyllysine; by EHMT2 is present on K1117. K1119 and K1121 each carry N6-acetyllysine. A 6; approximate repeat occupies 1119 to 1120 (KP). Residues 1121–1616 (KSQACEPSEP…KIKEEEAAKD (496 aa)) form an interaction with the PRC2/EED-EZH2 complex region. The SAM-dependent MTase C5-type domain occupies 1139–1599 (LRTLDVFSGC…LEIKLCMLAK (461 aa)). A catalytic region spans residues 1139–1616 (LRTLDVFSGC…KIKEEEAAKD (478 aa)). S-adenosyl-L-methionine-binding positions include S1146, 1150 to 1151 (GL), 1168 to 1169 (EM), 1190 to 1191 (DC), and C1191. C1226 is an active-site residue. 2 positions are modified to N6-acetyllysine: K1349 and K1415. S-adenosyl-L-methionine-binding residues include N1578 and V1580. K1609 is covalently cross-linked (Glycyl lysine isopeptide (Lys-Gly) (interchain with G-Cter in SUMO2)).

Belongs to the class I-like SAM-binding methyltransferase superfamily. C5-methyltransferase family. As to quaternary structure, homodimer. Forms a stable complex with E2F1, BB1 and HDAC1. Forms a complex with DMAP1 and HDAC2, with direct interaction. Interacts with the PRC2/EED-EZH2 complex. Probably part of a corepressor complex containing ZNF304, TRIM28, SETDB1 and DNMT1. Interacts with UHRF1; promoting its recruitment to hemimethylated DNA. Interacts with USP7, promoting its deubiquitination. Interacts with PCNA. Interacts with MBD2 and MBD3. Interacts with DNMT3A and DNMT3B. Interacts with UBC9. Interacts with CSNK1D. Interacts with HDAC1. Interacts with BAZ2A/TIP5. Interacts with SIRT7. Interacts with ZNF263; recruited to the SIX3 promoter along with other proteins involved in chromatin modification and transcriptional corepression where it contributes to transcriptional repression. Interacts with L3MBTL3 and DCAF5; the interaction requires DNMT1 methylation at Lys-142 and is necessary to target DNMT1 for ubiquitination by the CRL4-DCAF5 E3 ubiquitin ligase complex and proteasomal degradation. Interacts with PHF20L1; the interaction requires DNMT1 methylation at Lys-142 and protects DNMT1 from ubiquitination and proteasomal degradation. Sumoylated; sumoylation increases activity. In terms of processing, acetylation on multiple lysines, mainly by KAT2B/PCAF, regulates cell cycle G(2)/M transition. Deacetylation of Lys-1349 and Lys-1415 by SIRT1 increases methyltransferase activity. Post-translationally, phosphorylation of Ser-154 by CDKs is important for enzymatic activity and protein stability. Phosphorylation of Ser-143 by AKT1 prevents methylation by SETD7 thereby increasing DNMT1 stability. Methylation at Lys-142 by SETD7 is necessary for the regulation of DNMT1 proteasomal degradation. In terms of processing, ubiquitinated by UHRF1; interaction with USP7 counteracts ubiquitination by UHRF1 by promoting deubiquitination and preventing degradation by the proteasome. Ubiquitous; highly expressed in fetal tissues, heart, kidney, placenta, peripheral blood mononuclear cells, and expressed at lower levels in spleen, lung, brain, small intestine, colon, liver, and skeletal muscle. Isoform 2 is less expressed than isoform 1.

The protein resides in the nucleus. The enzyme catalyses a 2'-deoxycytidine in DNA + S-adenosyl-L-methionine = a 5-methyl-2'-deoxycytidine in DNA + S-adenosyl-L-homocysteine + H(+). Functionally, methylates CpG residues. Preferentially methylates hemimethylated DNA. Associates with DNA replication sites in S phase maintaining the methylation pattern in the newly synthesized strand, that is essential for epigenetic inheritance. Associates with chromatin during G2 and M phases to maintain DNA methylation independently of replication. It is responsible for maintaining methylation patterns established in development. DNA methylation is coordinated with methylation of histones. Mediates transcriptional repression by direct binding to HDAC2. In association with DNMT3B and via the recruitment of CTCFL/BORIS, involved in activation of BAG1 gene expression by modulating dimethylation of promoter histone H3 at H3K4 and H3K9. Probably forms a corepressor complex required for activated KRAS-mediated promoter hypermethylation and transcriptional silencing of tumor suppressor genes (TSGs) or other tumor-related genes in colorectal cancer (CRC) cells. Also required to maintain a transcriptionally repressive state of genes in undifferentiated embryonic stem cells (ESCs). Associates at promoter regions of tumor suppressor genes (TSGs) leading to their gene silencing. Promotes tumor growth. The sequence is that of DNA (cytosine-5)-methyltransferase 1 (DNMT1) from Homo sapiens (Human).